Here is a 207-residue protein sequence, read N- to C-terminus: Holliday junction branch migration complex subunit RuvA (207 aa).

The interval 1–64 (MIGRLRGNLL…EDAQLLYGFN (64 aa)) is domain I. The segment at 65–143 (TKNERALFRE…GWGAGDLFTP (79 aa)) is domain II. Residues 144 to 158 (ATDAAPMDDGSEFIT) form a flexible linker region. Residues 159 to 207 (SPQSAVDEAVSALIALGYKPQQASKTVSQIAKPDMTSEVLIRESLKSMI) are domain III.

It belongs to the RuvA family. In terms of assembly, homotetramer. Forms an RuvA(8)-RuvB(12)-Holliday junction (HJ) complex. HJ DNA is sandwiched between 2 RuvA tetramers; dsDNA enters through RuvA and exits via RuvB. An RuvB hexamer assembles on each DNA strand where it exits the tetramer. Each RuvB hexamer is contacted by two RuvA subunits (via domain III) on 2 adjacent RuvB subunits; this complex drives branch migration. In the full resolvosome a probable DNA-RuvA(4)-RuvB(12)-RuvC(2) complex forms which resolves the HJ.

It is found in the cytoplasm. The RuvA-RuvB-RuvC complex processes Holliday junction (HJ) DNA during genetic recombination and DNA repair, while the RuvA-RuvB complex plays an important role in the rescue of blocked DNA replication forks via replication fork reversal (RFR). RuvA specifically binds to HJ cruciform DNA, conferring on it an open structure. The RuvB hexamer acts as an ATP-dependent pump, pulling dsDNA into and through the RuvAB complex. HJ branch migration allows RuvC to scan DNA until it finds its consensus sequence, where it cleaves and resolves the cruciform DNA. This chain is Holliday junction branch migration complex subunit RuvA, found in Aliivibrio fischeri (strain ATCC 700601 / ES114) (Vibrio fischeri).